Consider the following 98-residue polypeptide: MSLTYLNIMLAFSTSLLGLLMYRSHLMSSLLCLEGLVLSLFVLTTLMVLTINLTLTNLLPIILLVFAACEAALGLSLLVVVSNTYGVDYVQNLNLLKC.

3 consecutive transmembrane segments (helical) span residues 1–21 (MSLT…GLLM), 31–51 (LCLE…VLTI), and 61–81 (IILL…LVVV).

Belongs to the complex I subunit 4L family. In terms of assembly, core subunit of respiratory chain NADH dehydrogenase (Complex I) which is composed of 45 different subunits.

The protein resides in the mitochondrion inner membrane. The enzyme catalyses a ubiquinone + NADH + 5 H(+)(in) = a ubiquinol + NAD(+) + 4 H(+)(out). Core subunit of the mitochondrial membrane respiratory chain NADH dehydrogenase (Complex I) which catalyzes electron transfer from NADH through the respiratory chain, using ubiquinone as an electron acceptor. Part of the enzyme membrane arm which is embedded in the lipid bilayer and involved in proton translocation. This Chalinolobus tuberculatus (New Zealand long-tailed bat) protein is NADH-ubiquinone oxidoreductase chain 4L (MT-ND4L).